Here is a 134-residue protein sequence, read N- to C-terminus: DNA-binding protein inhibitor ID-2 (134 aa).

The tract at residues 1-24 (MKAFSPVRSVRKNSLSDHGLGISR) is disordered. Phosphoserine occurs at positions 14 and 25. Residues 23–75 (SRSKTPVDDPMSLLYNMNDCYSKLKELVPSIPQNKKVSKMEILQHVIDYILDL) enclose the bHLH domain. The short motif at 106–115 (LNTDISILSL) is the Nuclear export signal element.

Interacts with GATA4 and NKX2-5. Interacts with NR0B2. Interacts with CLOCK and BMAL1. Interacts with IFI204. Interacts with NEDD9/HEF1. Interacts with ASB4; this interaction promotes ID2 proteasomal degradation. Post-translationally, ubiquitinated in a ASB4-depedent manner, leading to proteasomal degradation. Phosphorylated in vitro by CDK1, PKA and PKC.

It localises to the cytoplasm. It is found in the nucleus. Its function is as follows. Transcriptional regulator (lacking a basic DNA binding domain) which negatively regulates the basic helix-loop-helix (bHLH) transcription factors by forming heterodimers and inhibiting their DNA binding and transcriptional activity. Implicated in regulating a variety of cellular processes, including cellular growth, senescence, differentiation, apoptosis, angiogenesis, and neoplastic transformation. Inhibits skeletal muscle and cardiac myocyte differentiation. Regulates the circadian clock by repressing the transcriptional activator activity of the CLOCK-BMAL1 heterodimer. Restricts the CLOCK and BMAL1 localization to the cytoplasm. Plays a role in both the input and output pathways of the circadian clock: in the input component, is involved in modulating the magnitude of photic entrainment and in the output component, contributes to the regulation of a variety of liver clock-controlled genes involved in lipid metabolism. The chain is DNA-binding protein inhibitor ID-2 (ID2) from Bos taurus (Bovine).